A 319-amino-acid chain; its full sequence is uncharacterized protein (319 aa).

The next 9 membrane-spanning stretches (helical) occupy residues 11-31 (GLWA…LGVF), 43-63 (ALGW…GVWW), 83-103 (LSVD…IPAL), 108-128 (VLFW…FAGV), 134-154 (FHWL…KLFL), 195-215 (LATP…LFAL), 220-240 (AIFA…FAIL), 260-280 (KVGL…IDFV), and 284-304 (PEVS…ASLI).

It belongs to the TerC family.

The protein resides in the cell membrane. This is an uncharacterized protein from Myxococcus xanthus.